The chain runs to 181 residues: Ubiquitin-like protein 4B (181 aa).

The region spanning 1-76 (MWLTVKLLLG…LNVIIRPLEK (76 aa)) is the Ubiquitin-like domain. The tract at residues 139-181 (PEGKHSGATGSTRESKGDMEPRRNMKCNLAHKDGFKREKSPGK) is disordered. 2 stretches are compositionally biased toward basic and acidic residues: residues 151 to 161 (RESKGDMEPRR) and 168 to 181 (AHKDGFKREKSPGK).

It localises to the cytoplasm. This chain is Ubiquitin-like protein 4B (UBL4B), found in Monodelphis domestica (Gray short-tailed opossum).